We begin with the raw amino-acid sequence, 137 residues long: Large ribosomal subunit protein uL16 (137 aa).

The protein belongs to the universal ribosomal protein uL16 family. As to quaternary structure, part of the 50S ribosomal subunit.

Its function is as follows. Binds 23S rRNA and is also seen to make contacts with the A and possibly P site tRNAs. The protein is Large ribosomal subunit protein uL16 of Thioalkalivibrio sulfidiphilus (strain HL-EbGR7).